Reading from the N-terminus, the 199-residue chain is GTP-binding protein Di-Ras2 (199 aa).

GTP-binding positions include 14-21, 33-39, 61-65, and 121-124; these read GAGGVGKS, RESYIPT, DTTGS, and NKCD. Ser-35 carries the phosphoserine modification. The short motif at 36 to 44 is the Effector region element; the sequence is YIPTVEDTY. Ser-126 carries the phosphoserine modification. 152 to 153 contacts GTP; the sequence is AK. Cysteine methyl ester is present on Cys-196. Cys-196 carries the S-geranylgeranyl cysteine lipid modification. Residues 197–199 constitute a propeptide, removed in mature form; that stretch reads VIM.

Belongs to the small GTPase superfamily. Di-Ras family. In terms of processing, ubiquitinated by the ECS(ASB11) complex via 'Lys-11'-linked ubiquitin chains, leading to its degradation by the proteasome.

Its subcellular location is the cell membrane. It catalyses the reaction GTP + H2O = GDP + phosphate + H(+). In terms of biological role, displays low GTPase activity and exists predominantly in the GTP-bound form. This Macaca fascicularis (Crab-eating macaque) protein is GTP-binding protein Di-Ras2 (DIRAS2).